The following is a 357-amino-acid chain: Inositol-tetrakisphosphate 1-kinase 3 (357 aa).

2 residues coordinate 1D-myo-inositol 1,3,4-trisphosphate: Lys-56 and Lys-98. ATP-binding residues include Arg-133 and Lys-183. Positions 190 and 222 each coordinate 1D-myo-inositol 1,3,4-trisphosphate. ATP-binding positions include 211–222 (QEFVNHGGVLFK), Ser-237, and Ser-262. Residues Asp-302, Asp-317, and Asn-319 each contribute to the Mg(2+) site. Asn-319 contacts 1D-myo-inositol 1,3,4-trisphosphate.

The protein belongs to the ITPK1 family. As to quaternary structure, monomer. It depends on Mg(2+) as a cofactor.

The enzyme catalyses 1D-myo-inositol 3,4,5,6-tetrakisphosphate + ATP = 1D-myo-inositol 1,3,4,5,6-pentakisphosphate + ADP + H(+). It carries out the reaction 1D-myo-inositol 1,3,4-trisphosphate + ATP = 1D-myo-inositol 1,3,4,5-tetrakisphosphate + ADP + H(+). The catalysed reaction is 1D-myo-inositol 1,3,4-trisphosphate + ATP = 1D-myo-inositol 1,3,4,6-tetrakisphosphate + ADP + H(+). Kinase that can phosphorylate various inositol polyphosphate such as Ins(3,4,5,6)P4 or Ins(1,3,4)P3 and participates in phytic acid biosynthesis in developing seeds. Phytic acid is the primary storage form of phosphorus in cereal grains and other plant seeds. The protein is Inositol-tetrakisphosphate 1-kinase 3 (ITPK3) of Oryza sativa subsp. indica (Rice).